The following is a 637-amino-acid chain: Nucleoside triphosphatase I (637 aa).

The Helicase ATP-binding domain occupies 43 to 205 (FLGLNSMNSI…QMLVNLLRPG (163 aa)). 56-63 (QETGVGKT) serves as a coordination point for ATP. Residues 142–145 (DECH) carry the DEXH box motif. The 180-residue stretch at 358–537 (ELYNYLYEHS…QLYKVFKHSS (180 aa)) folds into the Helicase C-terminal domain. The segment at 459-526 (DIFILDMTWN…DIIQSKSKEF (68 aa)) is binding to the cap-specific mRNA (nucleoside-2'-O-)-methyltransferase.

Belongs to the helicase family. NPH I subfamily. Monomer. Interacts (via C-terminus) with RAP94 (via N-terminus). Interacts with the cap-specific mRNA (nucleoside-2'-O-)-methyltransferase.

The protein localises to the virion. It carries out the reaction a ribonucleoside 5'-triphosphate + H2O = a ribonucleoside 5'-diphosphate + phosphate + H(+). DNA-dependent ATPase required for providing the needed energy to achieve the termination of early transcripts. Acts in concert with the RAP94 subunit of the virion RNA polymerase and the capping enzyme/VTF to catalyze release of UUUUUNU-containing nascent RNA from the elongation complex. NPH-I must bind ssDNA in order to exhibit ATPase activity. In Vertebrata (FPV), this protein is Nucleoside triphosphatase I (NPH1).